Here is a 598-residue protein sequence, read N- to C-terminus: Fumarate reductase flavoprotein subunit (598 aa).

FAD is bound by residues 12–16 (GAGGA), 36–38 (ISK), 44–52 (SHTVAAEGG), 156–158 (HFV), and aspartate 212. Position 45 is a tele-8alpha-FAD histidine (histidine 45). Residues histidine 233 and arginine 249 contribute to the active site. Residues 356 to 357 (HY), glutamate 380, and 391 to 397 (RLGSNSL) contribute to the FAD site. The tract at residues 577 to 598 (AKRVYGGEATAQDKQNKEKANG) is disordered.

The protein belongs to the FAD-dependent oxidoreductase 2 family. FRD/SDH subfamily. Part of an enzyme complex containing four subunits: a flavoprotein (FrdA), an iron-sulfur protein (FrdB), and two hydrophobic anchor proteins (FrdC and FrdD). FAD serves as cofactor.

It is found in the cell inner membrane. The enzyme catalyses a quinone + succinate = fumarate + a quinol. It carries out the reaction a menaquinone + succinate = a menaquinol + fumarate. Its function is as follows. Two distinct, membrane-bound, FAD-containing enzymes are responsible for the catalysis of fumarate and succinate interconversion; the fumarate reductase is used in anaerobic growth, and the succinate dehydrogenase is used in aerobic growth. This chain is Fumarate reductase flavoprotein subunit (frdA), found in Proteus vulgaris.